Here is a 547-residue protein sequence, read N- to C-terminus: DEAD-box ATP-dependent RNA helicase 31 (547 aa).

The span at 1–34 (MFDFGLSEDDSELGEVDEDDGPSGFEDDLFDDEG) shows a compositional bias: acidic residues. Residues 1-74 (MFDFGLSEDD…HTRESGGGDS (74 aa)) are disordered. Residues 53–70 (IKGEPIDQEGVVHTRESG) are compositionally biased toward basic and acidic residues. The Q motif motif lies at 79–107 (TRFDECSLSPLTLKGVKAAGYERMTAVQE). Residues 110–293 (LPIILKGKDV…HIAMKRDLEF (184 aa)) form the Helicase ATP-binding domain. 123–130 (AKTGTGKT) contributes to the ATP binding site. The DEAD box motif lies at 241-244 (DEAD). The Helicase C-terminal domain occupies 327–478 (LLTDHISENV…TKRKVEKALA (152 aa)).

This sequence belongs to the DEAD box helicase family.

It carries out the reaction ATP + H2O = ADP + phosphate + H(+). The protein is DEAD-box ATP-dependent RNA helicase 31 of Oryza sativa subsp. japonica (Rice).